The sequence spans 324 residues: Homeobox protein Nkx-2.5 (324 aa).

The segment at residues 138–197 (RRKPRVLFSQAQVYELERRFKQQRYLSAPERDQLASVLKLTSTQVKIWFQNRRYKCKRQR) is a DNA-binding region (homeobox).

This sequence belongs to the NK-2 homeobox family. Homodimer (via the homeobox); binds DNA as homodimer. Interacts (via the homeobox) with TBX5 (via the T-box); this complex binds DNA. Interacts with HIPK1 and HIPK2, but not HIPK3. Interacts with the C-terminal zinc finger of GATA4 through its homeobox domain. Also interacts with JARID2 which represses its ability to activate transcription of ANF. Interacts with FBLIM1. Interacts with TBX18. Interacts with histone methyltransferase NSD2 (via HMG box). Interacts with NEDD9. Interacts with TBX1. Expressed only in the heart.

The protein localises to the nucleus. Transcription factor required for the development of the heart and the spleen. During heart development, acts as a transcriptional activator of NPPA/ANF in cooperation with GATA4. May cooperate with TBX2 to negatively modulate expression of NPPA/ANF in the atrioventricular canal. Binds to the core DNA motif of NPPA promoter. Together with PBX1, required for spleen development through a mechanism that involves CDKN2B repression. Positively regulates transcription of genes such as COL3A1 and MMP2, resulting in increased pulmonary endothelial fibrosis in response to hypoxia. This chain is Homeobox protein Nkx-2.5 (NKX2-5), found in Homo sapiens (Human).